The chain runs to 469 residues: UDP-N-acetylmuramate--L-alanine ligase (469 aa).

113 to 119 (GTHGKTT) is an ATP binding site.

The protein belongs to the MurCDEF family.

It localises to the cytoplasm. It catalyses the reaction UDP-N-acetyl-alpha-D-muramate + L-alanine + ATP = UDP-N-acetyl-alpha-D-muramoyl-L-alanine + ADP + phosphate + H(+). It functions in the pathway cell wall biogenesis; peptidoglycan biosynthesis. Functionally, cell wall formation. The protein is UDP-N-acetylmuramate--L-alanine ligase of Neisseria meningitidis serogroup A / serotype 4A (strain DSM 15465 / Z2491).